Consider the following 967-residue polypeptide: Phosphoenolpyruvate carboxylase 2 (967 aa).

At Ser13 the chain carries Phosphoserine. Residues His174 and Lys602 contribute to the active site.

It belongs to the PEPCase type 1 family. In terms of assembly, homotetramer. The cofactor is Mg(2+).

Its subcellular location is the cytoplasm. The catalysed reaction is oxaloacetate + phosphate = phosphoenolpyruvate + hydrogencarbonate. It participates in photosynthesis; C3 acid pathway. By light-reversible phosphorylation. Functionally, through the carboxylation of phosphoenolpyruvate (PEP) it forms oxaloacetate, a four-carbon dicarboxylic acid source for the tricarboxylic acid cycle. In Zea mays (Maize), this protein is Phosphoenolpyruvate carboxylase 2 (PEP4).